The primary structure comprises 268 residues: uncharacterized protein (268 aa).

The HTH iclR-type domain occupies 15–77 (NQALIRGLRL…NAAGSYRLTI (63 aa)). Residues 37–56 (LAKLAELANLNKSTAHRLLQ) constitute a DNA-binding region (H-T-H motif). The 174-residue stretch at 92-265 (IIHVASPYLE…AEQISLELGY (174 aa)) folds into the IclR-ED domain.

This is an uncharacterized protein from Haemophilus influenzae (strain ATCC 51907 / DSM 11121 / KW20 / Rd).